The sequence spans 384 residues: Cyclohexane-1-carbonyl-CoA dehydrogenase (384 aa).

This sequence belongs to the acyl-CoA dehydrogenase family. As to quaternary structure, homotetramer. FAD serves as cofactor.

It carries out the reaction cyclohexane-1-carbonyl-CoA + oxidized [electron-transfer flavoprotein] + H(+) = cyclohex-1-ene-1-carbonyl-CoA + reduced [electron-transfer flavoprotein]. In terms of biological role, mediates the conversion of cyclohexane-1-carbonyl-CoA (ChCoA) into cyclohex-1-ene-1-carbonyl-CoA in biosynthesis of cyclohexane-1-carboxylate, a by-product produced during fermentation of benzoate and crotonate to acetate. The polypeptide is Cyclohexane-1-carbonyl-CoA dehydrogenase (Syntrophus aciditrophicus (strain SB)).